Consider the following 414-residue polypeptide: Protein RecA (414 aa).

Residue 78–85 participates in ATP binding; it reads GPESSGKT. Positions 361–384 are enriched in basic and acidic residues; it reads QEKAVEALKKEEGSKEDALTGNKD. The disordered stretch occupies residues 361 to 414; that stretch reads QEKAVEALKKEEGSKEDALTGNKDETDDSAQKNSAASKAKRAEVVGLPADDSLF.

The protein belongs to the RecA family.

It is found in the cytoplasm. Its function is as follows. Can catalyze the hydrolysis of ATP in the presence of single-stranded DNA, the ATP-dependent uptake of single-stranded DNA by duplex DNA, and the ATP-dependent hybridization of homologous single-stranded DNAs. It interacts with LexA causing its activation and leading to its autocatalytic cleavage. In Treponema denticola (strain ATCC 35405 / DSM 14222 / CIP 103919 / JCM 8153 / KCTC 15104), this protein is Protein RecA.